The chain runs to 1114 residues: Probable guanine nucleotide exchange factor MCF2L2 (1114 aa).

Positions 11-193 (PQELTRRLAT…ELGGTLEYRH (183 aa)) constitute a CRAL-TRIO domain. A Spectrin repeat occupies 323-428 (QHFEHDFCKA…KWDILGKSLE (106 aa)). A disordered region spans residues 530–614 (QTRPVQPVAP…NPELEQQARL (85 aa)). Positions 546 to 559 (KWVSSKTSQPSTSV) are enriched in polar residues. Basic and acidic residues predominate over residues 577-606 (LNSRGKEDDETKFEVKSEEIFESHHERGNP). The DH domain occupies 619–822 (PRRRIIRDLL…EDLIKSCELA (204 aa)). Residues 834–954 (DIGKLGKLLL…WFSEISKLLM (121 aa)) enclose the PH domain. Positions 962 to 975 (DQGNPQFEMSTSKG) are enriched in polar residues. Residues 962–1114 (DQGNPQFEMS…LRPRTSAQES (153 aa)) form a disordered region. The span at 986–997 (NMERATTSKEDP) shows a compositional bias: basic and acidic residues. Residues 1017–1028 (TFEDCEGAEDME) show a composition bias toward acidic residues. Composition is skewed to basic and acidic residues over residues 1043 to 1067 (DDSHETCSSKSAFLERGESSQGEKE) and 1074 to 1084 (TATRSTEEERA).

The protein belongs to the MCF2 family. As to expression, significantly expressed in brain and modestly in pancreas, brain and testis.

Probably functions as a guanine nucleotide exchange factor. This chain is Probable guanine nucleotide exchange factor MCF2L2 (MCF2L2), found in Homo sapiens (Human).